Consider the following 141-residue polypeptide: Proteasome maturation protein (141 aa).

Residue K39 forms a Glycyl lysine isopeptide (Lys-Gly) (interchain with G-Cter in SUMO2) linkage.

It belongs to the POMP/UMP1 family. In terms of assembly, constituent of preproteasomes, but not of mature 20S proteasomes. Within the preproteasome, may directly interact with PSMB1/beta6, PSMB4/beta7, PSMB5/beta5, PSMB6/beta1 and PSMB9/beta1i. Interaction with PSMB8/beta5i is controversial. Forms tetramers.

Its subcellular location is the cytoplasm. The protein resides in the cytosol. The protein localises to the nucleus. It localises to the microsome membrane. Its function is as follows. Molecular chaperone essential for the assembly of standard proteasomes and immunoproteasomes. Degraded after completion of proteasome maturation. Mediates the association of 20S preproteasome with the endoplasmic reticulum. The polypeptide is Proteasome maturation protein (POMP) (Bos taurus (Bovine)).